The following is a 701-amino-acid chain: Glycine--tRNA ligase beta subunit (701 aa).

Belongs to the class-II aminoacyl-tRNA synthetase family. As to quaternary structure, tetramer of two alpha and two beta subunits.

Its subcellular location is the cytoplasm. It catalyses the reaction tRNA(Gly) + glycine + ATP = glycyl-tRNA(Gly) + AMP + diphosphate. This Helicobacter pylori (strain G27) protein is Glycine--tRNA ligase beta subunit.